A 457-amino-acid polypeptide reads, in one-letter code: Guanine nucleotide-binding protein subunit alpha homolog (457 aa).

The 327-residue stretch at 131–457 folds into the G-alpha domain; that stretch reads RQVKLLLLGA…QRNLNALMLQ (327 aa). The interval 134–147 is G1 motif; that stretch reads KLLLLGAGESGKST. GTP-binding positions include 139 to 146, 274 to 280, 299 to 303, 369 to 372, and Ala-429; these read GAGESGKS, LHCRKAT, DVGGQ, and NKTD. Positions 146 and 280 each coordinate Mg(2+). A G2 motif region spans residues 272–280; sequence DILHCRKAT. Residues 295–304 form a G3 motif region; that stretch reads FVFVDVGGQR. Residues 365–372 are G4 motif; it reads ILFLNKTD. The tract at residues 427-432 is G5 motif; that stretch reads TTAIDT.

Belongs to the G-alpha family. G(12) subfamily. In terms of assembly, g proteins are composed of 3 units; alpha, beta and gamma. The alpha chain contains the guanine nucleotide binding site. As to expression, in ovary, expressed in nurse cells and oocyte. In early embryos, distributed uniformly. At the extended germband stage, accumulates in the mesoderm.

Its subcellular location is the cytoplasm. May play a role in a signal transduction pathway used during gastrulation. Required specifically for the ventral furrow and posterior midgut invaginations, where it is necessary for coordinating cell shape changes. Functionally, guanine nucleotide-binding proteins (G proteins) are involved as modulators or transducers in various transmembrane signaling systems. This chain is Guanine nucleotide-binding protein subunit alpha homolog (cta), found in Drosophila melanogaster (Fruit fly).